Here is a 112-residue protein sequence, read N- to C-terminus: Flowering-promoting factor 1-like protein 2 (112 aa).

The protein belongs to the FPF1 family. Expressed in leaves and in some parts of the flowers, mainly in the sepals.

Functionally, modulates the competence to flowering of apical meristems. The chain is Flowering-promoting factor 1-like protein 2 (FLP2) from Arabidopsis thaliana (Mouse-ear cress).